Here is a 444-residue protein sequence, read N- to C-terminus: Pre-mRNA-splicing factor cwc25 (444 aa).

Disordered regions lie at residues 1–27, 168–385, and 397–425; these read MGSGDLNMKKSWHPQRSGNVAATQKAE, LASM…TDLD, and EAERAEREADEKARQQNKKFRGGDAGFMS. Positions 19–65 form a coiled coil; that stretch reads NVAATQKAEAEAIAERKKLQQRLQEIEEERRKEEIQKALEAAGGKRK. Positions 186-199 are enriched in basic residues; the sequence is QRRHKHRSHHHRSD. 2 stretches are compositionally biased toward basic and acidic residues: residues 200 to 220 and 228 to 281; these read RHRDRDDDRDRDSARDRDRDR and DSRD…DDRS. A compositionally biased stretch (basic residues) spans 282-293; that stretch reads RRHRFPQGRSRS. 3 stretches are compositionally biased toward basic and acidic residues: residues 305-344, 360-372, and 397-410; these read RREYSRERDSGGPSSRRDDRNSRDQNRPRRDYAKEDEQPK, DGDHKNAEEERAK, and EAERAEREADEKAR. Residues 364-417 are a coiled coil; the sequence is KNAEEERAKKLAAMQAAATDLDKAREERLKALAEAERAEREADEKARQQNKKFR.

The protein belongs to the CWC25 family. As to quaternary structure, associated with the spliceosome.

It is found in the nucleus. Its function is as follows. Involved in pre-mRNA splicing. The chain is Pre-mRNA-splicing factor cwc25 (msp-6) from Neurospora crassa (strain ATCC 24698 / 74-OR23-1A / CBS 708.71 / DSM 1257 / FGSC 987).